The chain runs to 465 residues: Protein maelstrom (465 aa).

Positions 2–69 (APKKHSGFMM…ADRGKRERLN (68 aa)) form a DNA-binding region, HMG box. Residues 415 to 440 (MRKSSKHTGPSVSTQRERNAGAWNLP) are disordered.

Belongs to the maelstrom family.

Its subcellular location is the cytoplasm. The protein resides in the nucleus. Functionally, involved both in the piRNA and miRNA metabolic processes. As a component of the meiotic nuage, plays a central role during oogenesis by repressing transposable elements and preventing their mobilization, which is essential for the germline integrity. Repression of transposable elements is mediated via the piRNA metabolic process, which mediates the repression of transposable elements during meiosis by forming complexes composed of piRNAs and Piwi proteins and governs the repression of transposons. As a nuclear component, it is required for proper differentiation in the germline stem cell (GSC) lineage by repressing microRNA-7 (miR-7), thereby acting as an indirect regulator of bag-of-marbles (Bam). Acts by binding to the promoter of miR-7 gene and repressing its expression; miR-7 repression alleviates the Bam repression by miR-7, thereby allowing differentiation in the germline stem cell (GSC) lineage. The sequence is that of Protein maelstrom (mael) from Drosophila yakuba (Fruit fly).